The following is a 314-amino-acid chain: Small ribosomal subunit protein RACK1 (314 aa).

Position 10 is a phosphothreonine (threonine 10). The stretch at glycine 13–asparagine 44 is one WD 1 repeat. Serine 39 bears the Phosphoserine mark. Tyrosine 52 is subject to Phosphotyrosine. WD repeat units follow at residues glycine 61–aspartate 91, glycine 103–asparagine 133, glycine 146–aspartate 178, glycine 190–aspartate 220, glutamate 231–aspartate 260, and serine 281–glutamine 311. Residue serine 148 is modified to Phosphoserine. Phosphoserine occurs at positions 242 and 255.

Belongs to the WD repeat G protein beta family. Ribosomal protein RACK1 subfamily. Component of the small ribosomal subunit (SSU). Mature yeast ribosomes consist of a small (40S) and a large (60S) subunit. The 40S small subunit contains 1 molecule of ribosomal RNA (18S rRNA) and at least 33 different proteins. The large 60S subunit contains 3 rRNA molecules (25S, 5.8S and 5S rRNA) and at least 46 different proteins. RACK1 is located at the head of the SSU in the vicinity of the mRNA exit channel. RACK1 interacts with the mRNA-binding protein SCP16. RACK1 also exists simultaneously as a homodimer in a cytosolic non-ribosome-bound form. Interacts with pck2. Interacts with pat1/ran1.

The protein resides in the cytoplasm. Its subcellular location is the membrane. Its function is as follows. Component of the ribosome, a large ribonucleoprotein complex responsible for the synthesis of proteins in the cell. The small ribosomal subunit (SSU) binds messenger RNAs (mRNAs) and translates the encoded message by selecting cognate aminoacyl-transfer RNA (tRNA) molecules. The large subunit (LSU) contains the ribosomal catalytic site termed the peptidyl transferase center (PTC), which catalyzes the formation of peptide bonds, thereby polymerizing the amino acids delivered by tRNAs into a polypeptide chain. The nascent polypeptides leave the ribosome through a tunnel in the LSU and interact with protein factors that function in enzymatic processing, targeting, and the membrane insertion of nascent chains at the exit of the ribosomal tunnel. Located at the head of the 40S ribosomal subunit in the vicinity of the mRNA exit channel, RACK1 serves as a scaffold protein that can recruit other proteins to the ribosome. Involved in induction of the ribosome quality control (RQC) pathway; a pathway that degrades nascent peptide chains during problematic translation. Involved in the negative regulation of translation of a specific subset of proteins. May be a receptor for protein kinase C in the regulation of actin cytoskeleton organization during cell wall synthesis and morphogenesis. Involved in the control of G2/M transition. May function as an anchoring protein for pat1/ran1 kinase. Negatively regulates the cell integrity transduction pathway by favoring translation of the tyrosine-phosphatases pyp1 and pyp2 that deactivate pmk1. Positively regulates the synthesis of the stress-responsive transcription factor Atf1 and the cytoplasmic catalase, a detoxificant enzyme induced by treatment with hydrogen peroxide. This chain is Small ribosomal subunit protein RACK1, found in Schizosaccharomyces pombe (strain 972 / ATCC 24843) (Fission yeast).